Reading from the N-terminus, the 228-residue chain is E3 ubiquitin-protein ligase RNF114 (228 aa).

An RING-type zinc finger spans residues 29–68 (CPVCLEVYEKPVQVPCGHVFCSACLQECLKPKKPVCGVCR). The Zn(2+) site is built by Cys91 and Cys94. A C2HC RNF-type zinc finger spans residues 91 to 110 (CHGCRKNFFLSKIRAHVATC). Residue Lys102 is modified to N6-acetyllysine. Zn(2+) is bound by residues His106 and Cys110. An N6-acetyllysine modification is found at Lys112.

In terms of assembly, interacts with XAF1, the interaction increases XAF1 stability and proapoptotic effects, and may regulate IFN signaling. Autoubiquitinated. Polyubiquitinated in the presence of E2 enzymes UBE2D1, UBE2D2 and UBE2D3, but only monoubiquitinated in the presence of UBE2E1.

The protein resides in the cytoplasm. The protein localises to the nucleus. The catalysed reaction is S-ubiquitinyl-[E2 ubiquitin-conjugating enzyme]-L-cysteine + [acceptor protein]-L-lysine = [E2 ubiquitin-conjugating enzyme]-L-cysteine + N(6)-ubiquitinyl-[acceptor protein]-L-lysine.. The protein operates within protein modification; protein ubiquitination. Its function is as follows. E3 ubiquitin-protein ligase that promotes the ubiquitination of various substrates. In turn, participates in the regulation of many biological processes including cell cycle, apoptosis, osteoclastogenesis as well as innate or adaptive immunity. Acts as negative regulator of NF-kappa-B-dependent transcription by promoting the ubiquitination and stabilization of the NF-kappa-B inhibitor TNFAIP3. May promote the ubiquitination of TRAF6 as well. Also acts as a negative regulator of T-cell activation. Inhibits cellular dsRNA responses and interferon production by targeting MAVS component for proteasomal degradation. Ubiquitinates the CDK inhibitor CDKN1A leading to its degradationand probably also CDKN1B and CDKN1C. This activity stimulates cell cycle G1-to-S phase transition and suppresses cellular senescence. May play a role in spermatogenesis. Inhibits classical swine fever virus replication by mediating 'K27'-linked ubiquitination of viral NS4B and inducing its degradation via the proteasome. The sequence is that of E3 ubiquitin-protein ligase RNF114 (RNF114) from Sus scrofa (Pig).